The following is a 302-amino-acid chain: Stanniocalcin-2 (302 aa).

Positions methionine 1–glycine 24 are cleaved as a signal peptide. A disordered region spans residues arginine 23–arginine 44. Residue asparagine 73 is glycosylated (N-linked (GlcNAc...) asparagine). Residues proline 218–arginine 302 are disordered. Basic and acidic residues predominate over residues proline 227–serine 264. 2 positions are modified to phosphoserine: serine 250 and serine 251. Threonine 254 is subject to Phosphothreonine.

The protein belongs to the stanniocalcin family. As to quaternary structure, homodimer; disulfide-linked.

The protein localises to the secreted. Its function is as follows. Has an anti-hypocalcemic action on calcium and phosphate homeostasis. This chain is Stanniocalcin-2 (STC2), found in Macaca nemestrina (Pig-tailed macaque).